The following is a 288-amino-acid chain: Orotidine 5'-phosphate decarboxylase (288 aa).

The active-site Proton donor is Lys-97.

This sequence belongs to the OMP decarboxylase family. Type 2 subfamily.

The catalysed reaction is orotidine 5'-phosphate + H(+) = UMP + CO2. It functions in the pathway pyrimidine metabolism; UMP biosynthesis via de novo pathway; UMP from orotate: step 2/2. The polypeptide is Orotidine 5'-phosphate decarboxylase (Clostridium tetani (strain Massachusetts / E88)).